The sequence spans 89 residues: Small ribosomal subunit protein uS15 (89 aa).

The protein belongs to the universal ribosomal protein uS15 family. Part of the 30S ribosomal subunit. Forms a bridge to the 50S subunit in the 70S ribosome, contacting the 23S rRNA.

Functionally, one of the primary rRNA binding proteins, it binds directly to 16S rRNA where it helps nucleate assembly of the platform of the 30S subunit by binding and bridging several RNA helices of the 16S rRNA. Forms an intersubunit bridge (bridge B4) with the 23S rRNA of the 50S subunit in the ribosome. This is Small ribosomal subunit protein uS15 from Ectopseudomonas mendocina (strain ymp) (Pseudomonas mendocina).